Consider the following 171-residue polypeptide: Orotate phosphoribosyltransferase (171 aa).

5-phospho-alpha-D-ribose 1-diphosphate-binding positions include Arg85, Lys86, Arg88, His90, and 110-118 (EDVVTTGNS). 2 residues coordinate orotate: Thr114 and Arg142.

Belongs to the purine/pyrimidine phosphoribosyltransferase family. PyrE subfamily. As to quaternary structure, homodimer. It depends on Mg(2+) as a cofactor.

It catalyses the reaction orotidine 5'-phosphate + diphosphate = orotate + 5-phospho-alpha-D-ribose 1-diphosphate. It functions in the pathway pyrimidine metabolism; UMP biosynthesis via de novo pathway; UMP from orotate: step 1/2. Its function is as follows. Catalyzes the transfer of a ribosyl phosphate group from 5-phosphoribose 1-diphosphate to orotate, leading to the formation of orotidine monophosphate (OMP). This is Orotate phosphoribosyltransferase from Thermoplasma acidophilum (strain ATCC 25905 / DSM 1728 / JCM 9062 / NBRC 15155 / AMRC-C165).